A 73-amino-acid polypeptide reads, in one-letter code: Large ribosomal subunit protein uL29 (73 aa).

This sequence belongs to the universal ribosomal protein uL29 family.

In Synechocystis sp. (strain ATCC 27184 / PCC 6803 / Kazusa), this protein is Large ribosomal subunit protein uL29 (rpmC).